The following is a 177-amino-acid chain: Pyruvate synthase subunit PorC (177 aa).

In terms of assembly, heterotetramer of one alpha, one beta, one delta and one gamma chain.

It carries out the reaction 2 oxidized [2Fe-2S]-[ferredoxin] + pyruvate + CoA = 2 reduced [2Fe-2S]-[ferredoxin] + acetyl-CoA + CO2 + H(+). This Methanothermobacter marburgensis (strain ATCC BAA-927 / DSM 2133 / JCM 14651 / NBRC 100331 / OCM 82 / Marburg) (Methanobacterium thermoautotrophicum) protein is Pyruvate synthase subunit PorC (porC).